A 749-amino-acid chain; its full sequence is Cytosolic phospholipase A2 (749 aa).

The interval 1–178 (MSFIDPYQHI…MKKLLGPKNS (178 aa)) is phospholipid binding. Serine 2 carries the post-translational modification Phosphoserine. The C2 domain maps to 6–122 (PYQHIIVEHH…KVGEKKQVPF (117 aa)). Ca(2+)-binding residues include aspartate 40, threonine 41, aspartate 43, asparagine 65, aspartate 93, alanine 94, and asparagine 95. Residues 140–740 (SSPDLRFSMA…SSVEARRFFN (601 aa)) form the PLA2c domain. Serine 228 functions as the Nucleophile in the catalytic mechanism. The residue at position 268 (threonine 268) is a Phosphothreonine. A disordered region spans residues 426 to 458 (AKHIVSNDSSDSDDESQGPKGTEHEEAEREYQN). A phosphoserine mark is found at serine 434, serine 435, and serine 437. The segment covering 446-457 (GTEHEEAEREYQ) has biased composition (basic and acidic residues). Position 505 is a phosphoserine; by MAPK (serine 505). Phosphoserine is present on serine 515. Lysine 541 is covalently cross-linked (Glycyl lysine isopeptide (Lys-Gly) (interchain with G-Cter in SUMO2)). The active-site Proton acceptor is aspartate 549. Lysine 606 is covalently cross-linked (Glycyl lysine isopeptide (Lys-Gly) (interchain with G-Cter in SUMO2)). A phosphoserine mark is found at serine 727 and serine 729.

As to quaternary structure, interacts with KAT5. Phosphorylated at both Ser-505 and Ser-727 in response to mitogenic stimuli. As to expression, detected in granulosa cells after stimulation with chorionic gonadotropin (at protein level).

Its subcellular location is the cytoplasm. It is found in the golgi apparatus membrane. It localises to the nucleus envelope. The catalysed reaction is a 1,2-diacyl-sn-glycero-3-phosphocholine + H2O = a 1-acyl-sn-glycero-3-phosphocholine + a fatty acid + H(+). It carries out the reaction a 1-O-alkyl-2-acyl-sn-glycero-3-phosphocholine + H2O = a 1-O-alkyl-sn-glycero-3-phosphocholine + a fatty acid + H(+). The enzyme catalyses a 1-acyl-sn-glycero-3-phosphocholine + H2O = sn-glycerol 3-phosphocholine + a fatty acid + H(+). It catalyses the reaction 1-hexadecanoyl-2-(5Z,8Z,11Z,14Z-eicosatetraenoyl)-sn-glycero-3-phosphocholine + H2O = 1-hexadecanoyl-sn-glycero-3-phosphocholine + (5Z,8Z,11Z,14Z)-eicosatetraenoate + H(+). The catalysed reaction is 1,2-di-(5Z,8Z,11Z,14Z-eicosatetraenoyl)-sn-glycero-3-phosphocholine + H2O = 1-(5Z,8Z,11Z,14Z-eicosatetraenoyl)-sn-glycero-3-phosphocholine + (5Z,8Z,11Z,14Z)-eicosatetraenoate + H(+). It carries out the reaction 1-octadecanoyl-2-(5Z,8Z,11Z,14Z-eicosatetraenoyl)-sn-glycero-3-phosphocholine + H2O = 1-octadecanoyl-sn-glycero-3-phosphocholine + (5Z,8Z,11Z,14Z)-eicosatetraenoate + H(+). The enzyme catalyses 1-hexadecanoyl-2-(9Z,12Z-octadecadienoyl)-sn-glycero-3-phosphocholine + H2O = (9Z,12Z)-octadecadienoate + 1-hexadecanoyl-sn-glycero-3-phosphocholine + H(+). It catalyses the reaction 1-octadecanoyl-2-(9Z,12Z,15Z-octadecatrienoyl)-sn-glycero-3-phosphocholine + H2O = (9Z,12Z,15Z)-octadecatrienoate + 1-octadecanoyl-sn-glycero-3-phosphocholine + H(+). The catalysed reaction is 1-(5Z,8Z,11Z,14Z-eicosatetraenoyl)-2-hexadecanoyl-sn-glycero-3-phosphocholine + H2O = 1-(5Z,8Z,11Z,14Z-eicosatetraenoyl)-sn-glycero-3-phosphocholine + hexadecanoate + H(+). It carries out the reaction 1-O-hexadecyl-2-(5Z,8Z,11Z,14Z)-eicosatetraenoyl-sn-glycero-3-phosphocholine + H2O = 1-O-hexadecyl-sn-glycero-3-phosphocholine + (5Z,8Z,11Z,14Z)-eicosatetraenoate + H(+). The enzyme catalyses 1,2-di-(9Z-octadecenoyl)-sn-glycero-3-phospho-(1'-sn-glycerol) + H2O = 1-(9Z-octadecenoyl)-sn-glycero-3-phospho-(1'-sn-glycerol) + (9Z)-octadecenoate + H(+). It catalyses the reaction 1-octadecanoyl-2-(5Z,8Z,11Z,14Z-eicosatetraenoyl)-sn-glycero-3-phosphate + H2O = 1-octadecanoyl-sn-glycero-3-phosphate + (5Z,8Z,11Z,14Z)-eicosatetraenoate + H(+). The catalysed reaction is 1-hexadecanoyl-sn-glycero-3-phosphocholine + H2O = sn-glycerol 3-phosphocholine + hexadecanoate + H(+). It carries out the reaction 2-(prostaglandin E2)-sn-glycero-3-phosphoethanolamine + H2O = sn-glycero-3-phosphoethanolamine + prostaglandin E2 + H(+). The enzyme catalyses 2-[(15S)-hydroxy-(5Z,8Z,11Z,13E)-eicosatetraenoyl]-sn-glycero-3-phosphocholine + H2O = (15S)-hydroxy-(5Z,8Z,11Z,13E)-eicosatetraenoate + sn-glycerol 3-phosphocholine + H(+). It catalyses the reaction 2-[(15R)-hydroxy-(5Z,8Z,11Z,13E)-eicosatetraenoyl]-sn-glycero-3-phosphocholine + H2O = (15R)-hydroxy-(5Z,8Z,11Z,13E)-eicosatetraenoate + sn-glycerol 3-phosphocholine + H(+). The catalysed reaction is 2-(prostaglandin E2)-sn-glycero-3-phosphocholine + H2O = prostaglandin E2 + sn-glycerol 3-phosphocholine + H(+). It carries out the reaction 2-[(11R)-hydroxy-(5Z,8Z,12E,14Z)-eicosatetraenoyl]-sn-glycero-3-phosphocholine + H2O = (11R)-hydroxy-(5Z,8Z,12E,14Z)-eicosatetraenoate + sn-glycerol 3-phosphocholine + H(+). The enzyme catalyses 1-(5Z,8Z,11Z,14Z-eicosatetraenoyl)-2-O-hexadecyl-sn-glycero-3-phosphocholine + H2O = 2-O-hexadecyl-sn-glycero-3-phosphocholine + (5Z,8Z,11Z,14Z)-eicosatetraenoate + H(+). It catalyses the reaction 1-octadecanoyl-2-(5Z,8Z,11Z,14Z-eicosatetraenoyl)-sn-glycero-3-phosphocholine + glycerol = 1-(5Z,8Z,11Z,14Z-eicosatetraenoyl)-glycerol + 1-octadecanoyl-sn-glycero-3-phosphocholine. The catalysed reaction is 1-octadecanoyl-2-(9Z,12Z,15Z-octadecatrienoyl)-sn-glycero-3-phosphocholine + glycerol = 1-(9Z,12Z,15Z-octadecatrienoyl)-glycerol + 1-octadecanoyl-sn-glycero-3-phosphocholine. The protein operates within membrane lipid metabolism; glycerophospholipid metabolism. Its pathway is lipid metabolism; arachidonate metabolism. It functions in the pathway lipid metabolism; prostaglandin biosynthesis. It participates in lipid metabolism; leukotriene B4 biosynthesis. Activated by cytosolic calcium, which is necessary for binding to membrane lipids. Activated by phosphorylation in response to mitogenic stimuli. Has primarily calcium-dependent phospholipase and lysophospholipase activities, with a major role in membrane lipid remodeling and biosynthesis of lipid mediators of the inflammatory response. Plays an important role in embryo implantation and parturition through its ability to trigger prostanoid production. Preferentially hydrolyzes the ester bond of the fatty acyl group attached at sn-2 position of phospholipids (phospholipase A2 activity). Selectively hydrolyzes sn-2 arachidonoyl group from membrane phospholipids, providing the precursor for eicosanoid biosynthesis via the cyclooxygenase pathway. In an alternative pathway of eicosanoid biosynthesis, hydrolyzes sn-2 fatty acyl chain of eicosanoid lysophopholipids to release free bioactive eicosanoids. Hydrolyzes the ester bond of the fatty acyl group attached at sn-1 position of phospholipids (phospholipase A1 activity) only if an ether linkage rather than an ester linkage is present at the sn-2 position. This hydrolysis is not stereospecific. Has calcium-independent phospholipase A2 and lysophospholipase activities in the presence of phosphoinositides. Has O-acyltransferase activity. Catalyzes the transfer of fatty acyl chains from phospholipids to a primary hydroxyl group of glycerol (sn-1 or sn-3), potentially contributing to monoacylglycerol synthesis. In Bos taurus (Bovine), this protein is Cytosolic phospholipase A2 (PLA2G4A).